Reading from the N-terminus, the 381-residue chain is Probable G-protein coupled receptor 34 (381 aa).

Residues 1-61 are Extracellular-facing; the sequence is MRSHTITMTT…LLSTVLTTSY (61 aa). N-linked (GlcNAc...) asparagine glycosylation is found at asparagine 28, asparagine 36, and asparagine 42. A helical transmembrane segment spans residues 62–82; that stretch reads SVIFIVGLVGNIIALYVFLGI. Over 83–88 the chain is Cytoplasmic; it reads HRKRNS. A helical transmembrane segment spans residues 89–109; the sequence is IQIYLLNVAIADLLLIFCLPF. The Extracellular portion of the chain corresponds to 110–128; it reads RIMYHINQNKWTLGVILCK. Cysteine 127 and cysteine 204 are disulfide-bonded. Residues 129 to 149 traverse the membrane as a helical segment; it reads VVGTLFYMNMYISIILLGFIS. Over 150 to 171 the chain is Cytoplasmic; the sequence is LDRYIKINRSIQQRKAITTKQS. The helical transmembrane segment at 172 to 192 threads the bilayer; the sequence is IYVCCIVWMLALGGFLTMIIL. Residues 193-216 lie on the Extracellular side of the membrane; that stretch reads TLKKGGHNSTMCFHYRDKHNAKGE. Asparagine 200 is a glycosylation site (N-linked (GlcNAc...) asparagine). A helical membrane pass occupies residues 217 to 237; that stretch reads AIFNFILVVMFWLIFLLIILS. The Cytoplasmic portion of the chain corresponds to 238 to 269; the sequence is YIKIGKNLLRISKRRSKFPNSGKYATTARNSF. The helical transmembrane segment at 270 to 290 threads the bilayer; it reads IVLIIFTICFVPYHAFRFIYI. At 291 to 310 the chain is on the extracellular side; it reads SSQLNVSSCYWKEIVHKTNE. N-linked (GlcNAc...) asparagine glycosylation is present at asparagine 295. The chain crosses the membrane as a helical span at residues 311-331; it reads IMLVLSSFNSCLDPVMYFLMS. Over 332–381 the chain is Cytoplasmic; it reads SNIRKIMCQLLFRRFQGEPSRSESTSEFKPGYSLHDTSVAVKIQSSSKST.

This sequence belongs to the G-protein coupled receptor 1 family.

It is found in the cell membrane. Functionally, G-protein-coupled receptor of lysophosphatidylserine (LysoPS) that plays different roles in immune response. Acts a damage-sensing receptor that triggers tissue repair upon recognition of dying neutrophils. Mechanistically, apoptotic neutrophils release lysophosphatydilserine that are recognized by type 3 innate lymphoid cells (ILC3s) via GPR34, which activates downstream PI3K-AKT and RAS-ERK signaling pathways leading to STAT3 activation and IL-22 production. Plays an important role in microglial function, controlling morphology and phagocytosis. The chain is Probable G-protein coupled receptor 34 (GPR34) from Gorilla gorilla gorilla (Western lowland gorilla).